Reading from the N-terminus, the 166-residue chain is Small ribosomal subunit protein uS5 (166 aa).

Residues 12–75 (YIEKLVQVNR…EAARRNMIQV (64 aa)) form the S5 DRBM domain.

It belongs to the universal ribosomal protein uS5 family. Part of the 30S ribosomal subunit. Contacts proteins S4 and S8.

In terms of biological role, with S4 and S12 plays an important role in translational accuracy. Its function is as follows. Located at the back of the 30S subunit body where it stabilizes the conformation of the head with respect to the body. The polypeptide is Small ribosomal subunit protein uS5 (Azotobacter vinelandii (strain DJ / ATCC BAA-1303)).